A 105-amino-acid polypeptide reads, in one-letter code: Small cysteine and glycine repeat-containing protein 6 (105 aa).

The segment at 4 to 83 (CGCGGCGGGC…HSCGCGCGCG (80 aa)) is 13 X 2 AA repeats of CG.

It belongs to the KRTAP type 28 family.

Its function is as follows. In the hair cortex, hair keratin intermediate filaments are embedded in an interfilamentous matrix, consisting of hair keratin-associated proteins (KRTAP), which are essential for the formation of a rigid and resistant hair shaft through their extensive disulfide bond cross-linking with abundant cysteine residues of hair keratins. The matrix proteins include the high-sulfur and high-glycine-tyrosine keratins. The chain is Small cysteine and glycine repeat-containing protein 6 from Homo sapiens (Human).